The primary structure comprises 484 residues: Glutamate--tRNA ligase (484 aa).

The short motif at Pro-11–Asn-21 is the 'HIGH' region element. The 'KMSKS' region signature appears at Lys-252 to Arg-256. Lys-255 serves as a coordination point for ATP.

It belongs to the class-I aminoacyl-tRNA synthetase family. Glutamate--tRNA ligase type 1 subfamily. Monomer.

It is found in the cytoplasm. It catalyses the reaction tRNA(Glu) + L-glutamate + ATP = L-glutamyl-tRNA(Glu) + AMP + diphosphate. In terms of biological role, catalyzes the attachment of glutamate to tRNA(Glu) in a two-step reaction: glutamate is first activated by ATP to form Glu-AMP and then transferred to the acceptor end of tRNA(Glu). This chain is Glutamate--tRNA ligase, found in Staphylococcus aureus (strain COL).